Consider the following 169-residue polypeptide: Small ribosomal subunit protein uS5 (169 aa).

The region spanning 15–79 (LKEQVVAINR…EAAKKNLRRI (65 aa)) is the S5 DRBM domain.

Belongs to the universal ribosomal protein uS5 family. Part of the 30S ribosomal subunit. Contacts proteins S4 and S8.

In terms of biological role, with S4 and S12 plays an important role in translational accuracy. Its function is as follows. Located at the back of the 30S subunit body where it stabilizes the conformation of the head with respect to the body. This Solibacter usitatus (strain Ellin6076) protein is Small ribosomal subunit protein uS5.